The primary structure comprises 65 residues: Toxin NaTx-22 (65 aa).

Residues 1–64 form the LCN-type CS-alpha/beta domain; it reads KDGYPVIKTT…TYPIPGKTCK (64 aa). 4 disulfide bridges follow: Cys12–Cys63, Cys16–Cys39, Cys25–Cys44, and Cys29–Cys46.

This sequence belongs to the long (4 C-C) scorpion toxin superfamily. Sodium channel inhibitor family. As to expression, expressed by the venom gland.

The protein resides in the secreted. Functionally, probable sodium channel inhibitor. In Centruroides sculpturatus (Arizona bark scorpion), this protein is Toxin NaTx-22.